The sequence spans 436 residues: Trigger factor (436 aa).

One can recognise a PPIase FKBP-type domain in the interval 162-247; that stretch reads GDRVIIDFEG…LNNVSEATLP (86 aa).

This sequence belongs to the FKBP-type PPIase family. Tig subfamily.

The protein localises to the cytoplasm. It catalyses the reaction [protein]-peptidylproline (omega=180) = [protein]-peptidylproline (omega=0). Involved in protein export. Acts as a chaperone by maintaining the newly synthesized protein in an open conformation. Functions as a peptidyl-prolyl cis-trans isomerase. The chain is Trigger factor from Neisseria meningitidis serogroup C (strain 053442).